A 567-amino-acid chain; its full sequence is Proline--tRNA ligase (567 aa).

It belongs to the class-II aminoacyl-tRNA synthetase family. ProS type 1 subfamily. In terms of assembly, homodimer.

Its subcellular location is the cytoplasm. It catalyses the reaction tRNA(Pro) + L-proline + ATP = L-prolyl-tRNA(Pro) + AMP + diphosphate. Its function is as follows. Catalyzes the attachment of proline to tRNA(Pro) in a two-step reaction: proline is first activated by ATP to form Pro-AMP and then transferred to the acceptor end of tRNA(Pro). As ProRS can inadvertently accommodate and process non-cognate amino acids such as alanine and cysteine, to avoid such errors it has two additional distinct editing activities against alanine. One activity is designated as 'pretransfer' editing and involves the tRNA(Pro)-independent hydrolysis of activated Ala-AMP. The other activity is designated 'posttransfer' editing and involves deacylation of mischarged Ala-tRNA(Pro). The misacylated Cys-tRNA(Pro) is not edited by ProRS. The chain is Proline--tRNA ligase from Geobacillus sp. (strain WCH70).